Reading from the N-terminus, the 569-residue chain is Proline--tRNA ligase (569 aa).

The protein belongs to the class-II aminoacyl-tRNA synthetase family. ProS type 1 subfamily. In terms of assembly, homodimer.

Its subcellular location is the cytoplasm. The enzyme catalyses tRNA(Pro) + L-proline + ATP = L-prolyl-tRNA(Pro) + AMP + diphosphate. Functionally, catalyzes the attachment of proline to tRNA(Pro) in a two-step reaction: proline is first activated by ATP to form Pro-AMP and then transferred to the acceptor end of tRNA(Pro). As ProRS can inadvertently accommodate and process non-cognate amino acids such as alanine and cysteine, to avoid such errors it has two additional distinct editing activities against alanine. One activity is designated as 'pretransfer' editing and involves the tRNA(Pro)-independent hydrolysis of activated Ala-AMP. The other activity is designated 'posttransfer' editing and involves deacylation of mischarged Ala-tRNA(Pro). The misacylated Cys-tRNA(Pro) is not edited by ProRS. The sequence is that of Proline--tRNA ligase from Shewanella loihica (strain ATCC BAA-1088 / PV-4).